We begin with the raw amino-acid sequence, 138 residues long: NADH dehydrogenase [ubiquinone] 1 alpha subcomplex subunit N7BM (138 aa).

This sequence belongs to the complex I NDUFA12 subunit family. In terms of assembly, complex I is composed of 42 different subunits.

The protein resides in the mitochondrion inner membrane. Accessory subunit of the mitochondrial membrane respiratory chain NADH dehydrogenase (Complex I), that is believed not to be involved in catalysis. Complex I functions in the transfer of electrons from NADH to the respiratory chain. The immediate electron acceptor for the enzyme is believed to be ubiquinone. The chain is NADH dehydrogenase [ubiquinone] 1 alpha subcomplex subunit N7BM from Yarrowia lipolytica (strain CLIB 122 / E 150) (Yeast).